The primary structure comprises 556 residues: MSNSDKNNNNNTNNNNNNNNNNNGNFGIWEEPDDDSTNENEELFNNLITKTTKFIDDDEEEEEEESSWDTLYAKHVETSNTTQPFNNSNSNNNNFQTQPTNISTLNPNNNNSNNSSSGSSSSRGVRTPRGTRSNSPPQPSKNETVQKESSGDISEGFTLIDSPNDNNDNKNNNKNNNNDSNIVDDDEDEEEFPTLSKKNQKRKPKKSTSSPSSTSSPIVSPQTQTSKLESSMDVSPSSGKQSWSELLKNVADEDINNNNNNNNNNNSNQYHQEEENYYDSDDYDSSPFAIINNSSTTTNNNNNNNNNTTTTTTTTTTTNSSSLPIVNSQSFEEGEEITSDIKIGIKPKTVTVPFQSTLSLRARTKQIKKVQQQQQQSSKSKPNNNNNKFVDNNPYAVLEEEERALQSAIKASLLLNSPVDLDSKQQNVSQQKQQQEQQPTTTTNSVSSSKSKSVATTDKNRTTSTAVAPTTSSNKKANKSNKTSTANTTATTTTTASSKKNKSNSNKSSNVSNTTTTTSTTENSASEGSFIKNAVIFIFILLLMVVGFKYTQTLNQ.

5 disordered regions span residues 1-40 (MSNSDKNNNNNTNNNNNNNNNNNGNFGIWEEPDDDSTNEN), 80-243 (NTTQ…KQSW), 278-324 (YDSD…SSLP), 363-391 (RTKQIKKVQQQQQQSSKSKPNNNNNKFVD), and 422-525 (DSKQ…ENSA). The span at 7 to 25 (NNNNNTNNNNNNNNNNNGN) shows a compositional bias: low complexity. Over residues 30–40 (EEPDDDSTNEN) the composition is skewed to acidic residues. Low complexity-rich tracts occupy residues 80–133 (NTTQ…GTRS) and 164–181 (NDNNDNKNNNKNNNNDSN). A compositionally biased stretch (acidic residues) spans 182–192 (IVDDDEDEEEF). The span at 207 to 226 (STSSPSSTSSPIVSPQTQTS) shows a compositional bias: low complexity. Residues 227-243 (KLESSMDVSPSSGKQSW) are compositionally biased toward polar residues. Low complexity-rich tracts occupy residues 292-322 (NNSSTTTNNNNNNNNNTTTTTTTTTTTNSSS), 369-388 (KVQQQQQQSSKSKPNNNNNK), and 425-525 (QQNV…ENSA). The chain crosses the membrane as a helical span at residues 528 to 548 (GSFIKNAVIFIFILLLMVVGF).

It is found in the membrane. This is an uncharacterized protein from Dictyostelium discoideum (Social amoeba).